Reading from the N-terminus, the 784-residue chain is Toll-like receptor 2 (784 aa).

Positions 1 to 20 (MPRALWPAWVWAIIILSMEG) are cleaved as a signal peptide. The Extracellular segment spans residues 21 to 587 (ASDKASSLSC…ARLSLSECHR (567 aa)). A disulfide bridge connects residues Cys-30 and Cys-36. LRR repeat units follow at residues 54–77 (VKSL…RCVN), 78–101 (LKTL…HLRN), 102–125 (LEYL…SLYV), 126–150 (LKFL…HLPD), 151–175 (LRTL…GLTF), 176–199 (LEEL…SIQN), 200–223 (ISHL…IVSS), 224–250 (LDCL…MSTS), 251–278 (VKKL…YVSG), 279–308 (IVEV…HLGN), 309–337 (VETL…LTGK), 338–361 (VKRV…HLKS), 362–388 (LEYL…AWPF), 389–414 (LQTL…TLKN), 415–437 (LNNL…WPGK), 438–457 (MKQL…CLPQ), 458–478 (TLEI…ILPQ), 479–500 (LKEL…FLPV), and 501–524 (LSVM…SFQQ). Residue Asn-114 is glycosylated (N-linked (GlcNAc...) asparagine). N-linked (GlcNAc...) asparagine glycosylation occurs at Asn-199. A disulfide bond links Cys-353 and Cys-382. Cysteines 432 and 454 form a disulfide. Asn-442 is a glycosylation site (N-linked (GlcNAc...) asparagine). The LRRCT domain maps to 525-579 (LKTLEAGGNNFICSCDFLSFTQGQQALGRVLVDWPDDYRCDSPSHVRGQRLQDAR). Residues 588–608 (AAVVSAACCALFLFLLLTGVL) traverse the membrane as a helical segment. Over 609-784 (CHRFHGLWYM…WLNLRAAIRS (176 aa)) the chain is Cytoplasmic. Residues 639 to 782 (ICYDAFVSYS…GFWLNLRAAI (144 aa)) form the TIR domain. Residue Lys-754 forms a Glycyl lysine isopeptide (Lys-Gly) (interchain with G-Cter in ubiquitin) linkage. The short motif at 761-778 (YLEWPLDETQQEGFWLNL) is the ATG16L1-binding motif element.

The protein belongs to the Toll-like receptor family. As to quaternary structure, interacts with LY96, TLR1 and TLR6 (via extracellular domain). TLR2 seems to exist in heterodimers with either TLR1 or TLR6 before stimulation by the ligand. The heterodimers form bigger oligomers in response to their corresponding ligands as well as further heterotypic associations with other receptors such as CD14 and/or CD36. Binds MYD88 (via TIR domain). Interacts with TICAM1. Interacts with CNPY3. Interacts with ATG16L1. Interacts with PPP1R11. Interacts with TICAM2. Interacts with TIRAP. In terms of processing, ubiquitinated at Lys-754 by PPP1R11, leading to its degradation. Deubiquitinated by USP2. Glycosylation of Asn-442 is critical for secretion of the N-terminal ectodomain of TLR2.

The protein resides in the membrane. Its subcellular location is the cytoplasmic vesicle. The protein localises to the phagosome membrane. It is found in the membrane raft. In terms of biological role, cooperates with LY96 to mediate the innate immune response to bacterial lipoproteins and other microbial cell wall components. Cooperates with TLR1 or TLR6 to mediate the innate immune response to bacterial lipoproteins or lipopeptides. Acts via MYD88 and TRAF6, leading to NF-kappa-B activation, cytokine secretion and the inflammatory response. May also promote apoptosis in response to lipoproteins. Forms activation clusters composed of several receptors depending on the ligand, these clusters trigger signaling from the cell surface and subsequently are targeted to the Golgi in a lipid-raft dependent pathway. Forms the cluster TLR2:TLR6:CD14:CD36 in response to diacylated lipopeptides and TLR2:TLR1:CD14 in response to triacylated lipopeptides. This Boselaphus tragocamelus (Nilgai) protein is Toll-like receptor 2 (TLR2).